A 472-amino-acid chain; its full sequence is Divalent metal cation transporter MntH (472 aa).

11 helical membrane passes run 59–79, 92–112, 144–164, 167–187, 196–216, 233–253, 288–308, 325–345, 377–397, 402–422, and 439–459; these read LLAFLGPGYMVSVGYMDPGNW, MLLSVILLSNVMAIVLQALAA, LAIIACDLAEVIGTAIALNLL, VPIILGAVITAVDVVLVLLLM, AFVIALLLVIFGCFVVQIVLA, VVADPQALYLAIGIVGATVMP, LALMLALFINASILILAAAVF, LLAPVLGVGVAATLFATALLA, VLTRGLAIVPVIVVVALYGEQ, LLLLSQVILSMQLPFAVIPLL, and WLMVVAWLIAGVIVVLNVKLL.

It belongs to the NRAMP family.

It is found in the cell inner membrane. Functionally, h(+)-stimulated, divalent metal cation uptake system. In Xylella fastidiosa (strain Temecula1 / ATCC 700964), this protein is Divalent metal cation transporter MntH.